Consider the following 727-residue polypeptide: Glucans biosynthesis glucosyltransferase H (727 aa).

A disordered region spans residues Ser18–Arg43. Helical transmembrane passes span Phe58–Val78, Leu94–Phe114, Leu278–Val298, Ile408–Ala428, Leu460–Leu480, Ile496–Ile516, and Leu572–Trp592.

The protein belongs to the glycosyltransferase 2 family. OpgH subfamily.

Its subcellular location is the cell inner membrane. It participates in glycan metabolism; osmoregulated periplasmic glucan (OPG) biosynthesis. Involved in the biosynthesis of osmoregulated periplasmic glucans (OPGs). This chain is Glucans biosynthesis glucosyltransferase H, found in Shewanella sp. (strain ANA-3).